The following is a 175-amino-acid chain: UPF0398 protein SGO_0588 (175 aa).

Belongs to the UPF0398 family.

The polypeptide is UPF0398 protein SGO_0588 (Streptococcus gordonii (strain Challis / ATCC 35105 / BCRC 15272 / CH1 / DL1 / V288)).